We begin with the raw amino-acid sequence, 166 residues long: Endoribonuclease YbeY (166 aa).

Zn(2+) contacts are provided by His-132, His-136, and His-142.

Belongs to the endoribonuclease YbeY family. Zn(2+) is required as a cofactor.

The protein localises to the cytoplasm. Single strand-specific metallo-endoribonuclease involved in late-stage 70S ribosome quality control and in maturation of the 3' terminus of the 16S rRNA. This Clostridium botulinum (strain Langeland / NCTC 10281 / Type F) protein is Endoribonuclease YbeY.